The sequence spans 143 residues: Nucleoside diphosphate kinase (143 aa).

6 residues coordinate ATP: K11, F59, R87, T93, R104, and N114. The active-site Pros-phosphohistidine intermediate is the H117.

Belongs to the NDK family. As to quaternary structure, homotetramer. The cofactor is Mg(2+).

The protein resides in the cytoplasm. The catalysed reaction is a 2'-deoxyribonucleoside 5'-diphosphate + ATP = a 2'-deoxyribonucleoside 5'-triphosphate + ADP. It carries out the reaction a ribonucleoside 5'-diphosphate + ATP = a ribonucleoside 5'-triphosphate + ADP. Functionally, major role in the synthesis of nucleoside triphosphates other than ATP. The ATP gamma phosphate is transferred to the NDP beta phosphate via a ping-pong mechanism, using a phosphorylated active-site intermediate. The sequence is that of Nucleoside diphosphate kinase from Shewanella oneidensis (strain ATCC 700550 / JCM 31522 / CIP 106686 / LMG 19005 / NCIMB 14063 / MR-1).